Reading from the N-terminus, the 213-residue chain is Reticulon-3 (213 aa).

A compositionally biased stretch (polar residues) spans 1 to 16 (MADTSGPQSSHISSSA). The disordered stretch occupies residues 1–20 (MADTSGPQSSHISSSAGEKG). Positions 25–213 (VQDLLYWRDV…LPGALKKKSE (189 aa)) constitute a Reticulon domain. The next 2 helical transmembrane spans lie at 45–65 (MVLL…YLVL) and 154–174 (VFNG…APIV).

As to quaternary structure, homodimer.

The protein localises to the endoplasmic reticulum membrane. It is found in the golgi apparatus membrane. Functionally, may be involved in membrane trafficking in the early secretory pathway. The polypeptide is Reticulon-3 (rtn3) (Xenopus tropicalis (Western clawed frog)).